The chain runs to 640 residues: Zinc finger protein 549 (640 aa).

The KRAB domain occupies Val-27–Trp-140. Residues Phe-217–His-241 form a C2H2-type 1; degenerate zinc finger. Lys-223 participates in a covalent cross-link: Glycyl lysine isopeptide (Lys-Gly) (interchain with G-Cter in SUMO2). The segment at Tyr-247–His-269 adopts a C2H2-type 2; degenerate zinc-finger fold. 13 C2H2-type zinc fingers span residues Tyr-275–His-298, Tyr-304–His-326, Tyr-332–His-355, Tyr-361–His-383, Tyr-389–His-411, Tyr-417–His-439, Tyr-445–His-467, Tyr-473–His-495, Tyr-501–His-523, Cys-529–His-551, Cys-557–His-579, Tyr-585–His-607, and Tyr-613–His-635.

This sequence belongs to the krueppel C2H2-type zinc-finger protein family.

The protein resides in the nucleus. In terms of biological role, may be involved in transcriptional regulation. The chain is Zinc finger protein 549 (ZNF549) from Homo sapiens (Human).